Consider the following 592-residue polypeptide: Protein phosphatase EYA1 (592 aa).

Disordered regions lie at residues 1–95 (MEMQ…RPYP) and 240–320 (MTSS…PDSD). Low complexity predominate over residues 8-26 (SPHSRLSGSSESPSGPKLG). Over residues 28-63 (SHINSNSMTPNGTEVKTEPMSSSETASTTADGSLNN) the composition is skewed to polar residues. Composition is skewed to low complexity over residues 64 to 75 (FSGSAIGSSSFS) and 241 to 253 (TSSN…PSTN). A compositionally biased stretch (polar residues) spans 254-287 (ATYQLQEPPSGITSQAVTDPTAEYSTIHSPSTPI). The span at 288 to 303 (KDSDSDRLRRGSDGKS) shows a compositional bias: basic and acidic residues. Asp-328 (nucleophile) is an active-site residue. Residues Asp-328, Asp-330, and Asp-556 each coordinate Mg(2+). The active-site Proton donor is the Asp-330.

It belongs to the HAD-like hydrolase superfamily. EYA family. In terms of assembly, probably interacts with SIX2, SIX4 and SIX5. Interacts with H2AX in response to DNA damage. Interacts with SIX3; promotes EYA1 translocation to the nucleus. Mg(2+) serves as cofactor. In terms of processing, sumoylated with SUMO1. In terms of tissue distribution, in the embryo, highly expressed in kidney with lower levels in brain. Weakly expressed in lung. In the adult, highly expressed in heart and skeletal muscle. Weakly expressed in brain and liver. No expression in eye or kidney.

The protein resides in the cytoplasm. The protein localises to the nucleus. It carries out the reaction O-phospho-L-tyrosyl-[protein] + H2O = L-tyrosyl-[protein] + phosphate. The catalysed reaction is O-phospho-L-seryl-[protein] + H2O = L-seryl-[protein] + phosphate. The enzyme catalyses O-phospho-L-threonyl-[protein] + H2O = L-threonyl-[protein] + phosphate. Functionally, functions both as protein phosphatase and as transcriptional coactivator for SIX1, and probably also for SIX2, SIX4 and SIX5. Tyrosine phosphatase that dephosphorylates 'Tyr-142' of histone H2AX (H2AXY142ph) and promotes efficient DNA repair via the recruitment of DNA repair complexes containing MDC1. 'Tyr-142' phosphorylation of histone H2AX plays a central role in DNA repair and acts as a mark that distinguishes between apoptotic and repair responses to genotoxic stress. Its function as histone phosphatase may contribute to its function in transcription regulation during organogenesis. Also has phosphatase activity with proteins phosphorylated on Ser and Thr residues (in vitro). Required for normal embryonic development of the craniofacial and trunk skeleton, kidneys and ears. Together with SIX1, it plays an important role in hypaxial muscle development; in this it is functionally redundant with EYA2. The chain is Protein phosphatase EYA1 (EYA1) from Homo sapiens (Human).